We begin with the raw amino-acid sequence, 200 residues long: Putative TLC domain-containing protein L438 (200 aa).

The TLC domain occupies 1–193 (MDYKQSNLFL…ILKILRAKLF (193 aa)). Transmembrane regions (helical) follow at residues 9 to 29 (FLFP…CGTF), 43 to 63 (THGI…LMIV), 74 to 94 (VHHF…YYLI), 96 to 116 (YLFA…AIKY), 131 to 151 (LAFF…LWFV), and 165 to 185 (YLIV…YRIL).

It is found in the membrane. This chain is Putative TLC domain-containing protein L438, found in Acanthamoeba polyphaga mimivirus (APMV).